We begin with the raw amino-acid sequence, 104 residues long: L-rhamnose mutarotase (104 aa).

Residue Tyr18 participates in substrate binding. The active-site Proton donor is the His22. Substrate-binding positions include Tyr41 and 76-77 (WW).

It belongs to the rhamnose mutarotase family. Homodimer.

Its subcellular location is the cytoplasm. The enzyme catalyses alpha-L-rhamnose = beta-L-rhamnose. It functions in the pathway carbohydrate metabolism; L-rhamnose metabolism. Involved in the anomeric conversion of L-rhamnose. The polypeptide is L-rhamnose mutarotase (Escherichia coli O7:K1 (strain IAI39 / ExPEC)).